The following is a 748-amino-acid chain: Putative transmembrane protein ORF88 (748 aa).

Positions 1 to 20 (MIIMKSIILLLAWFLTKTQA) are cleaved as a signal peptide. Residues 21–723 (NMLTESLYLS…LNLAPFKTLS (703 aa)) lie on the Extracellular side of the membrane. Residues asparagine 55, asparagine 78, asparagine 99, asparagine 152, asparagine 189, asparagine 390, asparagine 467, and asparagine 499 are each glycosylated (N-linked (GlcNAc...) asparagine; by host). The interval 531 to 574 (LTFDSPPPPPTTTQAPPPPPTTTQAPPPPPTTTQAPPPPIVINT) is disordered. The span at 535–570 (SPPPPPTTTQAPPPPPTTTQAPPPPPTTTQAPPPPI) shows a compositional bias: pro residues. Residues asparagine 573, asparagine 584, asparagine 599, asparagine 612, and asparagine 617 are each glycosylated (N-linked (GlcNAc...) asparagine; by host). A disordered region spans residues 650–680 (PSIGRAPIPPPDVPVEPPRSIPTTNAPSPEE). Positions 656 to 669 (PIPPPDVPVEPPRS) are enriched in pro residues. The helical transmembrane segment at 724 to 744 (YAGIGVVSFALLFTILVVCLI) threads the bilayer. The Cytoplasmic portion of the chain corresponds to 745-748 (KFSI).

The protein resides in the host membrane. This is Putative transmembrane protein ORF88 from Magallana gigas (Pacific oyster).